We begin with the raw amino-acid sequence, 220 residues long: Protein-L-isoaspartate O-methyltransferase (220 aa).

Ser70 is a catalytic residue.

Belongs to the methyltransferase superfamily. L-isoaspartyl/D-aspartyl protein methyltransferase family.

It localises to the cytoplasm. The catalysed reaction is [protein]-L-isoaspartate + S-adenosyl-L-methionine = [protein]-L-isoaspartate alpha-methyl ester + S-adenosyl-L-homocysteine. Catalyzes the methyl esterification of L-isoaspartyl residues in peptides and proteins that result from spontaneous decomposition of normal L-aspartyl and L-asparaginyl residues. It plays a role in the repair and/or degradation of damaged proteins. The chain is Protein-L-isoaspartate O-methyltransferase from Halorhodospira halophila (strain DSM 244 / SL1) (Ectothiorhodospira halophila (strain DSM 244 / SL1)).